The chain runs to 828 residues: Periplasmic nitrate reductase (828 aa).

The segment at residues 1-31 (MKLSRRSFMKANAVAAAAAAAGLSVPGVARA) is a signal peptide (tat-type signal). The 4Fe-4S Mo/W bis-MGD-type domain occupies 39–95 (IKWDKAPCRFCGTGCGVLVGTQQGRVVACQGDPDAPVNRGLNCIKGYFLPKIMYGKD). Residues cysteine 46, cysteine 49, cysteine 53, and cysteine 81 each coordinate [4Fe-4S] cluster. Residues lysine 83, glutamine 150, asparagine 175, cysteine 179, 212 to 219 (WGSNMAEM), 243 to 247 (STFQH), 262 to 264 (QSD), methionine 372, glutamine 376, asparagine 482, 508 to 509 (SD), lysine 531, aspartate 558, and 718 to 727 (TGRVLEHWHT) contribute to the Mo-bis(molybdopterin guanine dinucleotide) site. Phenylalanine 794 contributes to the substrate binding site. Residues asparagine 802 and lysine 819 each contribute to the Mo-bis(molybdopterin guanine dinucleotide) site.

It belongs to the prokaryotic molybdopterin-containing oxidoreductase family. NasA/NapA/NarB subfamily. Component of the periplasmic nitrate reductase NapAB complex composed of NapA and NapB. [4Fe-4S] cluster is required as a cofactor. The cofactor is Mo-bis(molybdopterin guanine dinucleotide). Post-translationally, predicted to be exported by the Tat system. The position of the signal peptide cleavage has not been experimentally proven.

It is found in the periplasm. The catalysed reaction is 2 Fe(II)-[cytochrome] + nitrate + 2 H(+) = 2 Fe(III)-[cytochrome] + nitrite + H2O. Catalytic subunit of the periplasmic nitrate reductase complex NapAB. Receives electrons from NapB and catalyzes the reduction of nitrate to nitrite. This Salmonella agona (strain SL483) protein is Periplasmic nitrate reductase.